Consider the following 770-residue polypeptide: Jhy protein (770 aa).

Disordered stretches follow at residues 1–249 (MNKY…SKQY), 295–438 (TVQN…SFVS), 493–527 (HRHESPSQRAPQSDHHMNTHRSTKTKKPAKQPQAE), 595–647 (ESQL…KRDV), and 708–740 (DYAKTIPKPKPPNLPDQTAKKTKNSRHSEKEGG). The segment covering 57–71 (SWSDIKDQIQDKDME) has biased composition (basic and acidic residues). Residues 72–85 (PDSLEEDSPSETEE) show a composition bias toward acidic residues. Residues 112 to 134 (HQVEDKYSDLRYDPNWKNKREEG) are compositionally biased toward basic and acidic residues. The segment covering 218–229 (SGLSQYLKSSSS) has biased composition (low complexity). Basic and acidic residues predominate over residues 295 to 314 (TVQNDKEVENTFMDPEDKWH). Residues 340–354 (RGQSSDAANGQQPSR) are compositionally biased toward polar residues. The span at 355-370 (RTAKARVRKQRKHQKG) shows a compositional bias: basic residues. Residues 383–398 (QNNQNNPFQQPQNQRQ) show a composition bias toward low complexity. Residues 410–438 (AQTNASNPNLQDARTLTHNPKVTSDSFVS) show a composition bias toward polar residues. A compositionally biased stretch (basic and acidic residues) spans 493 to 509 (HRHESPSQRAPQSDHHM). 2 stretches are compositionally biased toward basic residues: residues 510–521 (NTHRSTKTKKPA) and 625–642 (GKRHRKRSSTKSSKLKGY).

As to expression, expressed in the brain, specifically in hypothalamus, pineal gland, and ependymal cells of the aqueduct of Sylvius, as well as in the choroid plexus of the third ventricle. Expressed in the ependymal cells lining the lateral ventricles (at protein level).

Functionally, required for the normal development of cilia in brain ependymal cells lining the ventricular surfaces. The polypeptide is Jhy protein (Mus musculus (Mouse)).